A 476-amino-acid chain; its full sequence is MDDAGGLGGSGGFRPGVDSLDEPPNSRIFLVISKHTSELVLRERFSPFGDIQDIWVVRDKHTKESKGVAFVKFARSSQACRAMEEMHGQCLGPSDTKPIKVFIAQSRSSGSHRDVEDEELTRIFVMIPKSYTEEDLREKFKVYGDIEYCSIIKNKVTGESKGLGYVRYLKPSQAAQAIENCDRSFRALLAEPKNKVSGSPEQDDYSSGRQEALGQEPRANLFPFVGEQQSEFSTFDKNDSRGQEAVSKRLSVVSRVPFTEEQLFSIFDIVPGLEYCEVPRDPYSNYGHGVVQYFNVASAIYAKYKLHGFQYPPGNRIVVSFLDDGSNMTELIRKMATQMVAAQLASMVWSTTSQQQFLQYGGNAASQAPQIQTDVVLPSCKKKAPPETPVKERLFVVFNPHPLPLDVLEDIFCRFGNLIEVYLVSGKNVGYVKYADRKSANEAITTLHGKILNGVRLKVMLADSPREESKKRQRTY.

Gly residues predominate over residues 1 to 14 (MDDAGGLGGSGGFR). Residues 1-20 (MDDAGGLGGSGGFRPGVDSL) are disordered. RRM domains follow at residues 26–106 (SRIF…IAQS) and 121–192 (TRIF…LAEP). Residue Lys-34 forms a Glycyl lysine isopeptide (Lys-Gly) (interchain with G-Cter in SUMO2) linkage. Residues 192–212 (PKNKVSGSPEQDDYSSGRQEA) are disordered. The span at 196–209 (VSGSPEQDDYSSGR) shows a compositional bias: polar residues. Phosphoserine occurs at positions 199 and 464. The 73-residue stretch at 392–464 (ERLFVVFNPH…VRLKVMLADS (73 aa)) folds into the RRM 3 domain.

It is found in the cytoplasm. The protein localises to the nucleus. RNA-binding protein with binding specificity for poly(C). May play an important role in neural development. This Mus musculus (Mouse) protein is RNA-binding protein 45 (Rbm45).